Reading from the N-terminus, the 160-residue chain is Cyclic pyranopterin monophosphate synthase (160 aa).

Substrate contacts are provided by residues Leu-74 to His-76 and Met-112 to Glu-113. Asp-127 is a catalytic residue.

It belongs to the MoaC family. In terms of assembly, homohexamer; trimer of dimers.

It catalyses the reaction (8S)-3',8-cyclo-7,8-dihydroguanosine 5'-triphosphate = cyclic pyranopterin phosphate + diphosphate. The protein operates within cofactor biosynthesis; molybdopterin biosynthesis. Catalyzes the conversion of (8S)-3',8-cyclo-7,8-dihydroguanosine 5'-triphosphate to cyclic pyranopterin monophosphate (cPMP). In Geobacter metallireducens (strain ATCC 53774 / DSM 7210 / GS-15), this protein is Cyclic pyranopterin monophosphate synthase.